The primary structure comprises 212 residues: Ras-like protein (212 aa).

15–22 (GGGGVGKS) contacts GTP. Residues 37–45 (YDPTIEDSY) carry the Effector region motif. GTP is bound by residues 62–66 (DTAGQ) and 121–124 (NKCD). Residues cysteine 205 and cysteine 206 are each lipidated (S-palmitoyl cysteine). Position 209 is a cysteine methyl ester (cysteine 209). Cysteine 209 carries S-geranylgeranyl cysteine lipidation. A propeptide spans 210–212 (IVM) (removed in mature form).

The protein belongs to the small GTPase superfamily. Ras family.

The protein localises to the cell membrane. It catalyses the reaction GTP + H2O = GDP + phosphate + H(+). Its activity is regulated as follows. Alternates between an inactive form bound to GDP and an active form bound to GTP. Activated by a guanine nucleotide-exchange factor (GEF) and inactivated by a GTPase-activating protein (GAP). The chain is Ras-like protein (rasA) from Emericella nidulans (strain FGSC A4 / ATCC 38163 / CBS 112.46 / NRRL 194 / M139) (Aspergillus nidulans).